Consider the following 345-residue polypeptide: UDP-N-acetylenolpyruvoylglucosamine reductase (345 aa).

Positions 59–254 (VGGPAACLAR…RKATQPLGRP (196 aa)) constitute an FAD-binding PCMH-type domain. The active site involves arginine 209. The Proton donor role is filled by cysteine 258. Glutamate 328 is an active-site residue.

It belongs to the MurB family. Requires FAD as cofactor.

It localises to the cytoplasm. It carries out the reaction UDP-N-acetyl-alpha-D-muramate + NADP(+) = UDP-N-acetyl-3-O-(1-carboxyvinyl)-alpha-D-glucosamine + NADPH + H(+). The protein operates within cell wall biogenesis; peptidoglycan biosynthesis. Functionally, cell wall formation. The sequence is that of UDP-N-acetylenolpyruvoylglucosamine reductase from Syntrophobacter fumaroxidans (strain DSM 10017 / MPOB).